A 526-amino-acid polypeptide reads, in one-letter code: Light-independent protochlorophyllide reductase subunit B (526 aa).

[4Fe-4S] cluster is bound at residue aspartate 36. Aspartate 290 serves as the catalytic Proton donor. A substrate-binding site is contributed by 425–426; the sequence is GL.

The protein belongs to the ChlB/BchB/BchZ family. Protochlorophyllide reductase is composed of three subunits; ChlL, ChlN and ChlB. Forms a heterotetramer of two ChlB and two ChlN subunits. [4Fe-4S] cluster is required as a cofactor.

The catalysed reaction is chlorophyllide a + oxidized 2[4Fe-4S]-[ferredoxin] + 2 ADP + 2 phosphate = protochlorophyllide a + reduced 2[4Fe-4S]-[ferredoxin] + 2 ATP + 2 H2O. It participates in porphyrin-containing compound metabolism; chlorophyll biosynthesis (light-independent). Component of the dark-operative protochlorophyllide reductase (DPOR) that uses Mg-ATP and reduced ferredoxin to reduce ring D of protochlorophyllide (Pchlide) to form chlorophyllide a (Chlide). This reaction is light-independent. The NB-protein (ChlN-ChlB) is the catalytic component of the complex. This is Light-independent protochlorophyllide reductase subunit B from Prochlorococcus marinus (strain MIT 9515).